A 288-amino-acid polypeptide reads, in one-letter code: HTH-type transcriptional regulator CzcR (288 aa).

Residues Met1–Thr58 enclose the HTH lysR-type domain. The H-T-H motif DNA-binding region spans Val18–Lys37.

It belongs to the LysR transcriptional regulatory family.

This Bacillus anthracis protein is HTH-type transcriptional regulator CzcR (czcR).